Reading from the N-terminus, the 205-residue chain is Large ribosomal subunit protein uL18 (205 aa).

This sequence belongs to the universal ribosomal protein uL18 family. As to quaternary structure, part of the 50S ribosomal subunit. Contacts the 5S and 23S rRNAs.

Functionally, this is one of the proteins that bind and probably mediate the attachment of the 5S RNA into the large ribosomal subunit, where it forms part of the central protuberance. The chain is Large ribosomal subunit protein uL18 from Pyrobaculum islandicum (strain DSM 4184 / JCM 9189 / GEO3).